Reading from the N-terminus, the 425-residue chain is Serine--tRNA ligase (425 aa).

An L-serine-binding site is contributed by 231–233; it reads TAE. ATP-binding positions include 262–264 and V278; that span reads RTE. E285 is a binding site for L-serine. Position 349-352 (349-352) interacts with ATP; sequence EVTS. T384 provides a ligand contact to L-serine.

It belongs to the class-II aminoacyl-tRNA synthetase family. Type-1 seryl-tRNA synthetase subfamily. As to quaternary structure, homodimer. The tRNA molecule binds across the dimer.

It localises to the cytoplasm. It catalyses the reaction tRNA(Ser) + L-serine + ATP = L-seryl-tRNA(Ser) + AMP + diphosphate + H(+). The enzyme catalyses tRNA(Sec) + L-serine + ATP = L-seryl-tRNA(Sec) + AMP + diphosphate + H(+). The protein operates within aminoacyl-tRNA biosynthesis; selenocysteinyl-tRNA(Sec) biosynthesis; L-seryl-tRNA(Sec) from L-serine and tRNA(Sec): step 1/1. Catalyzes the attachment of serine to tRNA(Ser). Is also able to aminoacylate tRNA(Sec) with serine, to form the misacylated tRNA L-seryl-tRNA(Sec), which will be further converted into selenocysteinyl-tRNA(Sec). This chain is Serine--tRNA ligase, found in Dictyoglomus thermophilum (strain ATCC 35947 / DSM 3960 / H-6-12).